Consider the following 128-residue polypeptide: Large ribosomal subunit protein bL17 (128 aa).

Belongs to the bacterial ribosomal protein bL17 family. In terms of assembly, part of the 50S ribosomal subunit. Contacts protein L32.

In Petrotoga mobilis (strain DSM 10674 / SJ95), this protein is Large ribosomal subunit protein bL17.